A 188-amino-acid polypeptide reads, in one-letter code: MAPTPDRDGQDKKVCLGVVTGAHGVRGLVRVKPYTEMPEGVAAYGPVETKDGATSFAISLKGMAKDLVICKLEGVDDRDVAAALRGTELYVPRERLPRASGDEEGWYYADLIGLRAVGLDGRDYGRIAGVENFGAGDLLEIAPAEGGQTVLMGFTDENVPEVDIAGGRVVIDPPAGTFGDDAEAERGE.

Residues 103–177 (EEGWYYADLI…RVVIDPPAGT (75 aa)) enclose the PRC barrel domain.

This sequence belongs to the RimM family. In terms of assembly, binds ribosomal protein uS19.

The protein resides in the cytoplasm. An accessory protein needed during the final step in the assembly of 30S ribosomal subunit, possibly for assembly of the head region. Essential for efficient processing of 16S rRNA. May be needed both before and after RbfA during the maturation of 16S rRNA. It has affinity for free ribosomal 30S subunits but not for 70S ribosomes. The polypeptide is Ribosome maturation factor RimM (Parvibaculum lavamentivorans (strain DS-1 / DSM 13023 / NCIMB 13966)).